The chain runs to 945 residues: Leucine--tRNA ligase 1 (945 aa).

A 'HIGH' region motif is present at residues 42 to 52 (PYTNSPLHIGH). Positions 625 to 629 (KMSKS) match the 'KMSKS' region motif. Position 628 (Lys628) interacts with ATP.

This sequence belongs to the class-I aminoacyl-tRNA synthetase family.

The protein localises to the cytoplasm. It catalyses the reaction tRNA(Leu) + L-leucine + ATP = L-leucyl-tRNA(Leu) + AMP + diphosphate. This Sulfurisphaera tokodaii (strain DSM 16993 / JCM 10545 / NBRC 100140 / 7) (Sulfolobus tokodaii) protein is Leucine--tRNA ligase 1.